Reading from the N-terminus, the 185-residue chain is Elongation factor P (185 aa).

This sequence belongs to the elongation factor P family.

It localises to the cytoplasm. The protein operates within protein biosynthesis; polypeptide chain elongation. Functionally, involved in peptide bond synthesis. Stimulates efficient translation and peptide-bond synthesis on native or reconstituted 70S ribosomes in vitro. Probably functions indirectly by altering the affinity of the ribosome for aminoacyl-tRNA, thus increasing their reactivity as acceptors for peptidyl transferase. This chain is Elongation factor P, found in Symbiobacterium thermophilum (strain DSM 24528 / JCM 14929 / IAM 14863 / T).